The following is a 322-amino-acid chain: Transcription cofactor vestigial-like protein 2 (322 aa).

Over residues 42 to 61 (ASPGSSASGSSSFSNPTPAS) the composition is skewed to low complexity. Disordered regions lie at residues 42–75 (ASPG…ERPP) and 248–322 (PGRL…PTLG). A compositionally biased stretch (basic and acidic residues) spans 62–75 (VKEEEGSPEKERPP). Low complexity-rich tracts occupy residues 248 to 258 (PGRLAPASAPA) and 270 to 283 (GEPA…PGGP). Over residues 312–322 (SAPPALYPTLG) the composition is skewed to pro residues.

It belongs to the vestigial family. Interacts with TEFs. Binds to TEAD1/TEF1. In terms of tissue distribution, skeletal muscle specific.

The protein localises to the nucleus. Its function is as follows. May act as a specific coactivator for the mammalian TEFs. May play a role in the development of skeletal muscles. This Mus musculus (Mouse) protein is Transcription cofactor vestigial-like protein 2 (Vgll2).